The sequence spans 334 residues: Probable allantoicase (334 aa).

It belongs to the allantoicase family.

The enzyme catalyses allantoate + H2O = (S)-ureidoglycolate + urea. The protein operates within nitrogen metabolism; (S)-allantoin degradation; (S)-ureidoglycolate from allantoate (aminidohydrolase route): step 1/1. This Acinetobacter baylyi (strain ATCC 33305 / BD413 / ADP1) protein is Probable allantoicase.